A 370-amino-acid polypeptide reads, in one-letter code: Homospermidine synthase (370 aa).

The protein belongs to the deoxyhypusine synthase family. Homotetramer. Requires NAD(+) as cofactor.

The enzyme catalyses putrescine + spermidine = sym-homospermidine + propane-1,3-diamine. It functions in the pathway alkaloid biosynthesis; pyrrolizidine alkaloid biosynthesis. Its function is as follows. Catalyzes the transfer of an aminobutyl unit from spermidine onto putrescine. The resulting polyamine homospermidine is a precursor in the biosynthesis of pyrrolizidine alkaloids. The chain is Homospermidine synthase (HSS1) from Senecio vulgaris (Common groundsel).